Here is a 965-residue protein sequence, read N- to C-terminus: Pullulanase 1, chloroplastic (965 aa).

The N-terminal 62 residues, 1–62, are a transit peptide targeting the chloroplast; that stretch reads MALTLTPTSS…SKTSLHCLCS (62 aa). Aspartate 552 (nucleophile) is an active-site residue. Glutamate 589 functions as the Proton donor in the catalytic mechanism.

The protein belongs to the glycosyl hydrolase 13 family.

It is found in the plastid. The protein resides in the chloroplast stroma. The catalysed reaction is Hydrolysis of (1-&gt;6)-alpha-D-glucosidic linkages in alpha- and beta-limit dextrins of amylopectin and glycogen, and in amylopectin and pullulan.. It functions in the pathway glycan biosynthesis; starch biosynthesis. It participates in glycan degradation; starch degradation. Functionally, involved in starch degradation and also probably in the trimming of pre-amylopectin chains during starch synthesis. The polypeptide is Pullulanase 1, chloroplastic (PU1) (Arabidopsis thaliana (Mouse-ear cress)).